Consider the following 508-residue polypeptide: Monocarboxylate transporter 9 (508 aa).

The Cytoplasmic portion of the chain corresponds to 1 to 12 (MEFQKSPDGGWG). A run of 12 helical transmembrane segments spans residues 13-33 (WVIV…PLAV), 53-73 (WVGS…SLFV), 80-100 (PVTI…SLAP), 102-122 (IYFL…LLYT), 137-157 (GLAL…YAAL), 164-184 (FYGL…ILAC), 303-323 (VFSA…PPSL), 341-361 (MPLI…LGIL), 370-390 (LYLY…IPFA), 396-416 (LAIL…FPYV), 431-451 (GILM…VGWF), and 460-480 (IAFY…LLAI). Residues 481-508 (LPCWDMCNKKLPKPAVPTTFFYKVASNV) are Cytoplasmic-facing.

This sequence belongs to the major facilitator superfamily. Monocarboxylate porter (TC 2.A.1.13) family.

The protein resides in the cell membrane. The catalysed reaction is creatine(in) = creatine(out). The enzyme catalyses (R)-carnitine(in) = (R)-carnitine(out). Its function is as follows. Extracellular pH-and Na(+)-sensitive low-affinity creatine transporter. Also functions as a pH-independent carnitine efflux transporter. The protein is Monocarboxylate transporter 9 (Slc16a9) of Mus musculus (Mouse).